Reading from the N-terminus, the 115-residue chain is NADH-ubiquinone oxidoreductase chain 3 (115 aa).

3 consecutive transmembrane segments (helical) span residues 3 to 23, 55 to 75, and 84 to 104; these read LIMV…VAFW, FFLV…LLPI, and INTM…GLAY.

This sequence belongs to the complex I subunit 3 family. As to quaternary structure, core subunit of respiratory chain NADH dehydrogenase (Complex I) which is composed of 45 different subunits. Interacts with TMEM186. Interacts with TMEM242.

It is found in the mitochondrion inner membrane. It carries out the reaction a ubiquinone + NADH + 5 H(+)(in) = a ubiquinol + NAD(+) + 4 H(+)(out). Functionally, core subunit of the mitochondrial membrane respiratory chain NADH dehydrogenase (Complex I) which catalyzes electron transfer from NADH through the respiratory chain, using ubiquinone as an electron acceptor. Essential for the catalytic activity of complex I. The chain is NADH-ubiquinone oxidoreductase chain 3 from Scotinomys teguina (Alston's brown mouse).